Reading from the N-terminus, the 517-residue chain is Crotonobetaine/carnitine--CoA ligase (517 aa).

It belongs to the ATP-dependent AMP-binding enzyme family.

The enzyme catalyses 4-(trimethylamino)butanoate + ATP + CoA = 4-(trimethylamino)butanoyl-CoA + AMP + diphosphate. It carries out the reaction crotonobetaine + ATP + CoA = crotonobetainyl-CoA + AMP + diphosphate. The catalysed reaction is (R)-carnitine + ATP + CoA = (R)-carnitinyl-CoA + AMP + diphosphate. Its pathway is amine and polyamine metabolism; carnitine metabolism. Catalyzes the transfer of CoA to carnitine, generating the initial carnitinyl-CoA needed for the CaiB reaction cycle. Also has activity toward crotonobetaine and gamma-butyrobetaine. This chain is Crotonobetaine/carnitine--CoA ligase, found in Shigella dysenteriae serotype 1 (strain Sd197).